Here is a 226-residue protein sequence, read N- to C-terminus: 8-oxoguanine DNA glycosylase/AP lyase (226 aa).

Residues Lys-149 and Asp-167 contribute to the active site.

It belongs to the type-2 OGG1 family.

It carries out the reaction 2'-deoxyribonucleotide-(2'-deoxyribose 5'-phosphate)-2'-deoxyribonucleotide-DNA = a 3'-end 2'-deoxyribonucleotide-(2,3-dehydro-2,3-deoxyribose 5'-phosphate)-DNA + a 5'-end 5'-phospho-2'-deoxyribonucleoside-DNA + H(+). Functionally, catalyzes the excision of an oxidatively damaged form of guanine (7,8-dihydro-8-oxoguanine = 8-oxoG) from DNA. Also cleaves the DNA backbone at apurinic/apyrimidinic sites (AP sites). The sequence is that of 8-oxoguanine DNA glycosylase/AP lyase from Aquifex aeolicus (strain VF5).